The chain runs to 284 residues: 4-diphosphocytidyl-2-C-methyl-D-erythritol kinase (284 aa).

Lys22 is a catalytic residue. 104–114 serves as a coordination point for ATP; it reads PVGAGLGGASS. Residue Asp146 is part of the active site.

Belongs to the GHMP kinase family. IspE subfamily.

It catalyses the reaction 4-CDP-2-C-methyl-D-erythritol + ATP = 4-CDP-2-C-methyl-D-erythritol 2-phosphate + ADP + H(+). The protein operates within isoprenoid biosynthesis; isopentenyl diphosphate biosynthesis via DXP pathway; isopentenyl diphosphate from 1-deoxy-D-xylulose 5-phosphate: step 3/6. In terms of biological role, catalyzes the phosphorylation of the position 2 hydroxy group of 4-diphosphocytidyl-2C-methyl-D-erythritol. The chain is 4-diphosphocytidyl-2-C-methyl-D-erythritol kinase from Hydrogenobaculum sp. (strain Y04AAS1).